The following is an 874-amino-acid chain: AP-1 complex subunit gamma-1 (874 aa).

Residues 761–873 enclose the GAE domain; it reads TVAKSHTVYT…QDQTDWAQPS (113 aa).

Belongs to the adaptor complexes large subunit family. In terms of assembly, adaptor protein complex 1 (AP-1) is a heterotetramer composed of two large adaptins (gamma-type subunit APL4 and beta-type subunit APL2), a medium adaptin (mu-type subunit APM1) and a small adaptin (sigma-type subunit APS1). AP-1 interacts with clathrin.

It is found in the cytoplasmic vesicle. The protein resides in the clathrin-coated vesicle membrane. Its subcellular location is the golgi apparatus. Its function is as follows. Adaptins are components of the adaptor complexes which link clathrin to receptors in coated vesicles. Clathrin-associated protein complexes are believed to interact with the cytoplasmic tails of membrane proteins, leading to their selection and concentration. The AP-1 complex interacts directly with clathrin. Required for apical growth extension. The chain is AP-1 complex subunit gamma-1 (APL4) from Mycosarcoma maydis (Corn smut fungus).